The chain runs to 135 residues: MAIYGIGTDIVQVSRVAAVMQRTNGRFAEKVLGPDELRVYHARHARSQARGLAFLATRFSVKEAFSKAIGLGMRWPMTWRALQTLNEPSGRPTCVASGELADWLAERGITSRVTLSDERDYAVSFVIAETPDTAD.

2 residues coordinate Mg(2+): D9 and E63.

Belongs to the P-Pant transferase superfamily. AcpS family. Mg(2+) serves as cofactor.

The protein localises to the cytoplasm. The enzyme catalyses apo-[ACP] + CoA = holo-[ACP] + adenosine 3',5'-bisphosphate + H(+). Functionally, transfers the 4'-phosphopantetheine moiety from coenzyme A to a Ser of acyl-carrier-protein. This Paraburkholderia phymatum (strain DSM 17167 / CIP 108236 / LMG 21445 / STM815) (Burkholderia phymatum) protein is Holo-[acyl-carrier-protein] synthase.